Consider the following 127-residue polypeptide: MIRTMMNAKIHRARVTESNLNYVGSITIDSDILEAVDILPNEKVAIVNNNNGARFETYVIAGERGSGKICLNGAASRLVEVGDVVIIMTYAQLNEEEIQNHAPKVAVMNEDNVIIEMIHEKENTIVL.

The active-site Schiff-base intermediate with substrate; via pyruvic acid is the S25. S25 is modified (pyruvic acid (Ser)). T57 is a binding site for substrate. The Proton donor role is filled by Y58. A substrate-binding site is contributed by 73 to 75 (GAA).

The protein belongs to the PanD family. As to quaternary structure, heterooctamer of four alpha and four beta subunits. Pyruvate is required as a cofactor. In terms of processing, is synthesized initially as an inactive proenzyme, which is activated by self-cleavage at a specific serine bond to produce a beta-subunit with a hydroxyl group at its C-terminus and an alpha-subunit with a pyruvoyl group at its N-terminus.

Its subcellular location is the cytoplasm. It catalyses the reaction L-aspartate + H(+) = beta-alanine + CO2. The protein operates within cofactor biosynthesis; (R)-pantothenate biosynthesis; beta-alanine from L-aspartate: step 1/1. Its function is as follows. Catalyzes the pyruvoyl-dependent decarboxylation of aspartate to produce beta-alanine. The protein is Aspartate 1-decarboxylase of Staphylococcus aureus (strain MSSA476).